The chain runs to 307 residues: Ribonuclease Z (307 aa).

Zn(2+) is bound by residues H63, H65, D67, H68, H141, D212, and H270. D67 serves as the catalytic Proton acceptor.

Belongs to the RNase Z family. In terms of assembly, homodimer. It depends on Zn(2+) as a cofactor.

The enzyme catalyses Endonucleolytic cleavage of RNA, removing extra 3' nucleotides from tRNA precursor, generating 3' termini of tRNAs. A 3'-hydroxy group is left at the tRNA terminus and a 5'-phosphoryl group is left at the trailer molecule.. Its function is as follows. Zinc phosphodiesterase, which displays some tRNA 3'-processing endonuclease activity. Probably involved in tRNA maturation, by removing a 3'-trailer from precursor tRNA. The polypeptide is Ribonuclease Z (Bacillus cereus (strain ZK / E33L)).